The following is a 357-amino-acid chain: Aurora kinase A- and ninein-interacting protein (357 aa).

Polar residues predominate over residues 72–93 (TSQQGKTNGADQRSVSSHTESQ). The disordered stretch occupies residues 72 to 102 (TSQQGKTNGADQRSVSSHTESQTNKESKEDA). The tract at residues 189 to 357 (QKEGEDSSCE…EGNQVIRHQA (169 aa)) is interaction with AURKA. The tract at residues 281–357 (KDSWSQLFTE…EGNQVIRHQA (77 aa)) is interaction with RBBP8/CtIP. The residue at position 292 (Ser-292) is a Phosphoserine.

It belongs to the AUNIP family. In terms of assembly, interacts (via C-terminus) with AURKA (via C-terminus). Interacts (via N-terminus) with NIN; this interaction blocks NIN phosphorylation by both AURKA and GSK3B. Identified in a complex with NIN and AURKA. Interacts with RBBP8/CtIP.

The protein resides in the nucleus. It is found in the chromosome. The protein localises to the cytoplasm. Its subcellular location is the cytoskeleton. It localises to the microtubule organizing center. The protein resides in the centrosome. It is found in the spindle pole. DNA-binding protein that accumulates at DNA double-strand breaks (DSBs) following DNA damage and promotes DNA resection and homologous recombination. Serves as a sensor of DNA damage: binds DNA with a strong preference for DNA substrates that mimic structures generated at stalled replication forks, and anchors RBBP8/CtIP to DSB sites to promote DNA end resection and ensuing homologous recombination repair. Inhibits non-homologous end joining (NHEJ). Required for the dynamic movement of AURKA at the centrosomes and spindle apparatus during the cell cycle. This Bos taurus (Bovine) protein is Aurora kinase A- and ninein-interacting protein.